A 1007-amino-acid polypeptide reads, in one-letter code: SUPPRESSOR OF ABI3-5 (1007 aa).

Disordered stretches follow at residues 1 to 185 and 204 to 269; these read MDPS…RDRE and ESPH…FSAT. Basic and acidic residues-rich tracts occupy residues 40 to 49, 94 to 120, 138 to 185, and 204 to 214; these read PDERLMRDDV, YYHD…RYDG, HSRD…RDRE, and ESPHKRYEKSR. A compositionally biased stretch (basic residues) spans 227-236; that stretch reads RSPRGRSHGR. Over residues 237–264 the composition is skewed to basic and acidic residues; the sequence is SYREDSYEGDHWNESERRREYEDRHNQD. The 81-residue stretch at 272–352 folds into the RRM 1 domain; that stretch reads ATVVVKGLSM…RKLMFHYSQP (81 aa). The segment at 378 to 407 adopts a RanBP2-type zinc-finger fold; it reads VPTDWICTICGCINFARRTSCFQCNEPKTK. Positions 432–512 constitute an RRM 2 domain; sequence HVLVVRGLDE…KILRVAYAKS (81 aa). Disordered stretches follow at residues 556-581, 631-656, 725-755, 771-797, 810-910, and 945-977; these read GEKQ…SAPQ, PDQN…SQQK, HETQ…STGQ, STSN…TLMG, ASSS…GITT, and SGLG…KKVD. The span at 631–645 shows a compositional bias: polar residues; sequence PDQNNESKVTENQPD. Composition is skewed to low complexity over residues 778–793 and 823–835; these read SALT…TTGG and PSAS…VSGS. Basic and acidic residues predominate over residues 849-867; sequence THREQPQTSYRDRAAERRN. In terms of domain architecture, G-patch spans 928–974; sequence ESNVGNRMLRNMGWHEGSGLGKDGSGMKEPVQAQGVDRRAGLGSQQK.

Interacts with the pre-spliceosomal component U2AF65A. Ubiquitous with highest expression in siliques toward the end of seed maturation.

It is found in the nucleus. Splicing factor that controls alternative splicing of the developmental regulator ABI3. Reduces splicing of a cryptic intron in ABI3, leading to a decreased in ABI3-beta transcript. Regulates the splicing of the receptor-like kinase SNC4/LRKL-2.6. The sequence is that of SUPPRESSOR OF ABI3-5 from Arabidopsis thaliana (Mouse-ear cress).